We begin with the raw amino-acid sequence, 284 residues long: Probable endonuclease 4 (284 aa).

Zn(2+) contacts are provided by His69, His113, Glu148, Asp182, His185, His217, Asp230, His232, and Glu262.

This sequence belongs to the AP endonuclease 2 family. Zn(2+) serves as cofactor.

The catalysed reaction is Endonucleolytic cleavage to 5'-phosphooligonucleotide end-products.. Functionally, endonuclease IV plays a role in DNA repair. It cleaves phosphodiester bonds at apurinic or apyrimidinic (AP) sites, generating a 3'-hydroxyl group and a 5'-terminal sugar phosphate. In Bifidobacterium longum subsp. infantis (strain ATCC 15697 / DSM 20088 / JCM 1222 / NCTC 11817 / S12), this protein is Probable endonuclease 4.